Consider the following 272-residue polypeptide: Phosphatidylglycerol--prolipoprotein diacylglyceryl transferase (272 aa).

Helical transmembrane passes span 17 to 37, 55 to 75, 90 to 110, 125 to 145, 174 to 194, 202 to 222, and 230 to 250; these read LQVH…WGLA, LVFY…VLFY, VWTG…AMLF, FIAP…FIGG, PSQI…LWWF, MAVS…MEFF, and GFIL…MLLI. Arginine 138 is an a 1,2-diacyl-sn-glycero-3-phospho-(1'-sn-glycerol) binding site.

The protein belongs to the Lgt family.

The protein localises to the cell inner membrane. The catalysed reaction is L-cysteinyl-[prolipoprotein] + a 1,2-diacyl-sn-glycero-3-phospho-(1'-sn-glycerol) = an S-1,2-diacyl-sn-glyceryl-L-cysteinyl-[prolipoprotein] + sn-glycerol 1-phosphate + H(+). It functions in the pathway protein modification; lipoprotein biosynthesis (diacylglyceryl transfer). In terms of biological role, catalyzes the transfer of the diacylglyceryl group from phosphatidylglycerol to the sulfhydryl group of the N-terminal cysteine of a prolipoprotein, the first step in the formation of mature lipoproteins. The polypeptide is Phosphatidylglycerol--prolipoprotein diacylglyceryl transferase (Acinetobacter baumannii (strain SDF)).